Here is a 357-residue protein sequence, read N- to C-terminus: Palmitoyltransferase ZDHHC20-A (357 aa).

Over 1-14 the chain is Cytoplasmic; the sequence is MAPSHAVRCCQRGL. The helical transmembrane segment at 15 to 35 threads the bilayer; it reads SWIPVIFINLVVCWSYYAYVV. Residues 36 to 50 are Lumenal-facing; that stretch reads ELCIYTIPNVNEQVI. The chain crosses the membrane as a helical span at residues 51-71; the sequence is YLVVFHAFFFMFMWSYWKTIS. Topologically, residues 72–166 are cytoplasmic; it reads SKPTNPSKEF…NNCVGFSNYK (95 aa). In terms of domain architecture, DHHC spans 123–173; sequence RYCDRCQLIKPDRCHHCSTCDKCVLKMDHHCPWVNNCVGFSNYKFFVLFLA. Catalysis depends on Cys-153, which acts as the S-palmitoyl cysteine intermediate. The chain crosses the membrane as a helical span at residues 167–187; the sequence is FFVLFLAYSMLYCVYIAATVL. Residues 188 to 204 are Lumenal-facing; sequence QYFIKFWTNQLPDTHAK. The chain crosses the membrane as a helical span at residues 205–228; sequence FHVLFLFFVAAMFFISILSLFSYH. The Cytoplasmic portion of the chain corresponds to 229-357; sequence LWLVGKNRTT…PVCVTLENES (129 aa).

This sequence belongs to the DHHC palmitoyltransferase family.

It localises to the golgi apparatus membrane. The protein resides in the cell membrane. It is found in the cytoplasm. The protein localises to the perinuclear region. Its subcellular location is the endoplasmic reticulum membrane. It localises to the endoplasmic reticulum-Golgi intermediate compartment membrane. It carries out the reaction L-cysteinyl-[protein] + hexadecanoyl-CoA = S-hexadecanoyl-L-cysteinyl-[protein] + CoA. The enzyme catalyses L-cysteinyl-[protein] + tetradecanoyl-CoA = S-tetradecanoyl-L-cysteinyl-[protein] + CoA. It catalyses the reaction L-cysteinyl-[protein] + octadecanoyl-CoA = S-octadecanoyl-L-cysteinyl-[protein] + CoA. In terms of biological role, palmitoyltransferase that could catalyze the addition of palmitate onto various protein substrates. Catalyzes palmitoylation of Cys residues on protein substrates and has a preference for acyl-CoA with C16 fatty acid chains but may also utilize acyl-CoA with C14 and C18 fatty acid chains. This is Palmitoyltransferase ZDHHC20-A from Danio rerio (Zebrafish).